Here is a 123-residue protein sequence, read N- to C-terminus: UPF0102 protein APP7_1414 (123 aa).

It belongs to the UPF0102 family.

This Actinobacillus pleuropneumoniae serotype 7 (strain AP76) protein is UPF0102 protein APP7_1414.